The following is a 311-amino-acid chain: MSSLRTDDDTWDIATSVGSTAVMVAAARAGETERDDALIRDPYAKILVAGAGTGVWETVLDSEFAAKIENLDPEAAAIFAHMGNYQAVRTHFFDAYYREAADAGIRQIVILASGLDSRAYRLDWPAGTTVYEIDQPKVLEYKSATLREHGIEPVAQRREVPVDLRFDWPTALHDAGFDASLPTAWLAEGLLMYLPAEAQDRLFELVTELSAPGSRIAVETAGVAATDRREAMRERFKKFADQLNLSSALDIQELVYDDPDRADVAEWLDAHGWRARGVHALDEMRRLDRLVELPDDPDRAAFSTFVTAQRL.

S-adenosyl-L-methionine contacts are provided by residues Asp-134 and 163–164 (DL).

This sequence belongs to the UPF0677 family.

Exhibits S-adenosyl-L-methionine-dependent methyltransferase activity. In Mycolicibacterium smegmatis (strain ATCC 700084 / mc(2)155) (Mycobacterium smegmatis), this protein is Putative S-adenosyl-L-methionine-dependent methyltransferase MSMEG_0095/MSMEI_0092.